A 323-amino-acid chain; its full sequence is Lipoyl synthase (323 aa).

[4Fe-4S] cluster-binding residues include Cys-61, Cys-66, Cys-72, Cys-87, Cys-91, Cys-94, and Ser-303. Residues 73–292 form the Radical SAM core domain; sequence WTKKTATFLV…EQYGLSIGIP (220 aa).

The protein belongs to the radical SAM superfamily. Lipoyl synthase family. [4Fe-4S] cluster serves as cofactor.

It localises to the cytoplasm. It catalyses the reaction [[Fe-S] cluster scaffold protein carrying a second [4Fe-4S](2+) cluster] + N(6)-octanoyl-L-lysyl-[protein] + 2 oxidized [2Fe-2S]-[ferredoxin] + 2 S-adenosyl-L-methionine + 4 H(+) = [[Fe-S] cluster scaffold protein] + N(6)-[(R)-dihydrolipoyl]-L-lysyl-[protein] + 4 Fe(3+) + 2 hydrogen sulfide + 2 5'-deoxyadenosine + 2 L-methionine + 2 reduced [2Fe-2S]-[ferredoxin]. The protein operates within protein modification; protein lipoylation via endogenous pathway; protein N(6)-(lipoyl)lysine from octanoyl-[acyl-carrier-protein]: step 2/2. In terms of biological role, catalyzes the radical-mediated insertion of two sulfur atoms into the C-6 and C-8 positions of the octanoyl moiety bound to the lipoyl domains of lipoate-dependent enzymes, thereby converting the octanoylated domains into lipoylated derivatives. In Protochlamydia amoebophila (strain UWE25), this protein is Lipoyl synthase.